The sequence spans 431 residues: Ammonium transporter 3 (431 aa).

The Extracellular segment spans residues 1–27; that stretch reads MEQFSTSSSESSDSSSEYSLEFYMDTS. The helical transmembrane segment at 28 to 48 threads the bilayer; that stretch reads WVLDAANLVFFMQAGFGMLEA. Over 49–63 the chain is Cytoplasmic; it reads GMVRAKNTKSILLKN. The helical transmembrane segment at 64-84 threads the bilayer; it reads LINTAICAISYYCVGHSFAYG. Topologically, residues 85 to 102 are extracellular; it reads KVNPNSFVGFGNFFLMDY. The helical transmembrane segment at 103 to 125 threads the bilayer; it reads THYAYWMIQWAYAATATTIATGA. Topologically, residues 126–134 are cytoplasmic; that stretch reads MAERLQLHC. The chain crosses the membrane as a helical span at residues 135–155; sequence YILFTLVQTILIYPFVAHWIW. The Extracellular segment spans residues 156 to 160; the sequence is SQNGW. A helical membrane pass occupies residues 161–181; sequence LFDLGIVDFAGGAVIHIVAGI. Residues 182 to 211 lie on the Cytoplasmic side of the membrane; that stretch reads TGACGSFLLGPRIGRFNQESGKPKNLPGHS. The chain crosses the membrane as a helical span at residues 212–232; sequence VVLMSLGAMILWYSWYGYTAG. Topologically, residues 233-249 are extracellular; the sequence is ASLGMTRSRVLPASRVS. Residues 250–270 form a helical membrane-spanning segment; sequence VVVTLSGATGLITVLGIGKIF. The Cytoplasmic segment spans residues 271-300; the sequence is NGHYDLVKGINGLIAGLVSSTSSCAYIEPW. Residues 301 to 321 form a helical membrane-spanning segment; that stretch reads AAIIIGFIGGIVYWFSSWALL. At 322 to 333 the chain is on the extracellular side; the sequence is NWLRLDDPVDST. A helical membrane pass occupies residues 334–354; the sequence is AIHLFGGCWSLISVAFFATHG. Topologically, residues 355 to 357 are cytoplasmic; the sequence is RVR. A helical transmembrane segment spans residues 358-378; sequence NPDIILPGGIFYGGGISLLWV. Residue glutamine 379 is a topological domain, extracellular. A helical transmembrane segment spans residues 380–400; it reads LVGMVLAILWAGFLSGIFFFT. Topologically, residues 401–431 are cytoplasmic; it reads MDYFGKLRVDVDTELAGLDNSNHGGSAYIFD.

It belongs to the ammonia transporter channel (TC 1.A.11.2) family.

It localises to the cell membrane. The protein localises to the endosome membrane. The protein resides in the cytoplasmic vesicle. It is found in the phagosome membrane. Functionally, ammonium transporter that mediates the import of ammonium in prespore cells. Controls ammonium homeostasis during growth and development. Ammonium has been shown to function as a morphogen at multiple steps during the development. May function as an ammonia sensor that relays information concerning ammonia concentrations to the signaling pathway involved in the slug versus culmination choice and regulates prestalk gene expression. In Dictyostelium discoideum (Social amoeba), this protein is Ammonium transporter 3 (amtC).